We begin with the raw amino-acid sequence, 143 residues long: ATP synthase epsilon chain (143 aa).

Belongs to the ATPase epsilon chain family. As to quaternary structure, F-type ATPases have 2 components, CF(1) - the catalytic core - and CF(0) - the membrane proton channel. CF(1) has five subunits: alpha(3), beta(3), gamma(1), delta(1), epsilon(1). CF(0) has three main subunits: a, b and c.

It is found in the cell membrane. Functionally, produces ATP from ADP in the presence of a proton gradient across the membrane. The chain is ATP synthase epsilon chain from Lacticaseibacillus casei (strain BL23) (Lactobacillus casei).